Here is a 521-residue protein sequence, read N- to C-terminus: uncharacterized protein (521 aa).

The disordered stretch occupies residues M1–K25. The next 6 membrane-spanning stretches (helical) occupy residues G68–L88, V114–V134, V160–G180, V192–L212, A290–W310, and L399–I419.

It is found in the cell membrane. This is an uncharacterized protein from Mycobacterium bovis (strain ATCC BAA-935 / AF2122/97).